A 230-amino-acid polypeptide reads, in one-letter code: ATP synthase subunit a (230 aa).

The next 6 membrane-spanning stretches (helical) occupy residues 26–46 (ANAVVYTWTVIVLLLVLSLIA), 83–103 (FFPLIATLAIFILVSNLVGLI), 112–132 (NVNTTAACAIVVFLATHVVGI), 143–163 (FMGPIWWLAPLMFFIEVIGHL), 182–202 (LVLMIFFALAPFLVPLPMMLM), and 203–223 (GVLVSFIQAFVFMLLAMIYIQ).

It belongs to the ATPase A chain family. In terms of assembly, F-type ATPases have 2 components, CF(1) - the catalytic core - and CF(0) - the membrane proton channel. CF(1) has five subunits: alpha(3), beta(3), gamma(1), delta(1), epsilon(1). CF(0) has three main subunits: a(1), b(2) and c(9-12). The alpha and beta chains form an alternating ring which encloses part of the gamma chain. CF(1) is attached to CF(0) by a central stalk formed by the gamma and epsilon chains, while a peripheral stalk is formed by the delta and b chains.

Its subcellular location is the cell inner membrane. Its function is as follows. Key component of the proton channel; it plays a direct role in the translocation of protons across the membrane. The protein is ATP synthase subunit a of Trichlorobacter lovleyi (strain ATCC BAA-1151 / DSM 17278 / SZ) (Geobacter lovleyi).